The sequence spans 134 residues: Loki profilin-1 (134 aa).

Residues L55 to I62 form a loki loop region.

Belongs to the Asgard profilin family.

The protein resides in the cytoplasm. The protein localises to the cytoskeleton. Its activity is regulated as follows. Inhibition of rabbit actin polymerization is reduced by phosphatidylinositol-(4,5)-P2(1,2-dipalmitoyl), a soluble form of the phospholipid phosphatidylinositol, suggesting an unknown lipid might regulate actin-profilin interaction in vivo. Functionally, binds to actin and affects the structure of the cytoskeleton. At high concentrations inhibits spontaneous rabbit actin nucleation. This strongly suggests this archaea has a profilin-regulated actin system, and actin-type genes can be identified in this organism. The sequence is that of Loki profilin-1 from Lokiarchaeum sp. (strain GC14_75).